A 302-amino-acid polypeptide reads, in one-letter code: ATP synthase gamma chain (302 aa).

Belongs to the ATPase gamma chain family. F-type ATPases have 2 components, CF(1) - the catalytic core - and CF(0) - the membrane proton channel. CF(1) has five subunits: alpha(3), beta(3), gamma(1), delta(1), epsilon(1). CF(0) has three main subunits: a, b and c.

The protein resides in the cell membrane. In terms of biological role, produces ATP from ADP in the presence of a proton gradient across the membrane. The gamma chain is believed to be important in regulating ATPase activity and the flow of protons through the CF(0) complex. In Kineococcus radiotolerans (strain ATCC BAA-149 / DSM 14245 / SRS30216), this protein is ATP synthase gamma chain.